We begin with the raw amino-acid sequence, 380 residues long: tRNA-specific 2-thiouridylase MnmA (380 aa).

ATP-binding positions include 26 to 33 (AMSGGVDS) and leucine 52. Cysteine 120 serves as the catalytic Nucleophile. Cysteines 120 and 217 form a disulfide. Residue glycine 144 coordinates ATP. The segment at 166-168 (RDQ) is interaction with tRNA. The Cysteine persulfide intermediate role is filled by cysteine 217.

It belongs to the MnmA/TRMU family.

Its subcellular location is the cytoplasm. The catalysed reaction is S-sulfanyl-L-cysteinyl-[protein] + uridine(34) in tRNA + AH2 + ATP = 2-thiouridine(34) in tRNA + L-cysteinyl-[protein] + A + AMP + diphosphate + H(+). Catalyzes the 2-thiolation of uridine at the wobble position (U34) of tRNA, leading to the formation of s(2)U34. This Jannaschia sp. (strain CCS1) protein is tRNA-specific 2-thiouridylase MnmA.